A 115-amino-acid chain; its full sequence is OV39 antigen (115 aa).

The chain is OV39 antigen (OV39) from Onchocerca volvulus.